We begin with the raw amino-acid sequence, 206 residues long: Flavin prenyltransferase UbiX (206 aa).

Residues 14-16, threonine 40, 101-104, and arginine 136 contribute to the FMN site; these read GAS and SMGT. The dimethylallyl phosphate site is built by tyrosine 166 and lysine 182.

It belongs to the UbiX/PAD1 family.

It carries out the reaction dimethylallyl phosphate + FMNH2 = prenylated FMNH2 + phosphate. Flavin prenyltransferase that catalyzes the synthesis of the prenylated FMN cofactor (prenyl-FMN) for 4-hydroxy-3-polyprenylbenzoic acid decarboxylase UbiD. The prenyltransferase is metal-independent and links a dimethylallyl moiety from dimethylallyl monophosphate (DMAP) to the flavin N5 and C6 atoms of FMN. The sequence is that of Flavin prenyltransferase UbiX from Halalkalibacterium halodurans (strain ATCC BAA-125 / DSM 18197 / FERM 7344 / JCM 9153 / C-125) (Bacillus halodurans).